Here is a 279-residue protein sequence, read N- to C-terminus: Protein SCO2 homolog, mitochondrial (279 aa).

The helical transmembrane segment at 73–90 (LVVTLLFGGGIIGTWWYV) threads the bilayer. The Mitochondrial intermembrane portion of the chain corresponds to 91–279 (HQEKEKRIQM…MKTFVRLFPD (189 aa)). The Thioredoxin domain occupies 97-271 (RIQMQRLEQL…IAESIRNHMK (175 aa)). Cu cation contacts are provided by cysteine 145, cysteine 149, and histidine 236. A disulfide bond links cysteine 145 and cysteine 149.

Belongs to the SCO1/2 family. In terms of assembly, homodimer.

It is found in the mitochondrion inner membrane. In terms of biological role, copper metallochaperone essential for the synthesis and maturation of cytochrome c oxidase subunit II (MT-CO2/COX2) by facilitating the incorporation of copper into the Cu(A) site of MT-CO2/COX2. Could also act as a thiol-disulfide oxidoreductase to regulate the redox state of the cysteines in SCO1 during maturation of MT-CO2/COX2. The sequence is that of Protein SCO2 homolog, mitochondrial (sco2) from Danio rerio (Zebrafish).